Reading from the N-terminus, the 439-residue chain is ATP-dependent RNA helicase RhlB (439 aa).

The short motif at 9 to 37 is the Q motif element; the sequence is QKFADLPLCDEVKQALNENGFEHCTPIQA. The region spanning 40 to 219 is the Helicase ATP-binding domain; that stretch reads LPVLLEKKDI…YDHMNDPVKV (180 aa). Position 53-60 (53-60) interacts with ATP; sequence AQTGTGKT. Residues 165–168 carry the DEAD box motif; that stretch reads DEAD. The Helicase C-terminal domain maps to 243-390; it reads KLKLLHSLIE…VTSYDRDALI (148 aa). The interval 394 to 439 is disordered; it reads PPVKIHRKPHAGGRNLRDRNGSPRPSGSHRSGSGRPPRHDRTRRHS. The segment covering 415-428 has biased composition (low complexity); it reads SPRPSGSHRSGSGR. Over residues 429–439 the composition is skewed to basic residues; it reads PPRHDRTRRHS.

The protein belongs to the DEAD box helicase family. RhlB subfamily. In terms of assembly, component of the RNA degradosome, which is a multiprotein complex involved in RNA processing and mRNA degradation.

It is found in the cytoplasm. The catalysed reaction is ATP + H2O = ADP + phosphate + H(+). In terms of biological role, DEAD-box RNA helicase involved in RNA degradation. Has RNA-dependent ATPase activity and unwinds double-stranded RNA. This Shewanella amazonensis (strain ATCC BAA-1098 / SB2B) protein is ATP-dependent RNA helicase RhlB.